The chain runs to 557 residues: Potassium-transporting ATPase potassium-binding subunit (557 aa).

10 consecutive transmembrane segments (helical) span residues methionine 1 to glycine 21, glutamine 62 to leucine 82, isoleucine 132 to phenylalanine 152, isoleucine 176 to threonine 196, valine 253 to isoleucine 273, alanine 279 to serine 299, isoleucine 371 to phenylalanine 391, leucine 415 to leucine 435, valine 482 to valine 502, and valine 528 to leucine 548.

Belongs to the KdpA family. In terms of assembly, the system is composed of three essential subunits: KdpA, KdpB and KdpC.

Its subcellular location is the cell membrane. Part of the high-affinity ATP-driven potassium transport (or Kdp) system, which catalyzes the hydrolysis of ATP coupled with the electrogenic transport of potassium into the cytoplasm. This subunit binds the extracellular potassium ions and delivers the ions to the membrane domain of KdpB through an intramembrane tunnel. The sequence is that of Potassium-transporting ATPase potassium-binding subunit from Clostridium acetobutylicum (strain ATCC 824 / DSM 792 / JCM 1419 / IAM 19013 / LMG 5710 / NBRC 13948 / NRRL B-527 / VKM B-1787 / 2291 / W).